Reading from the N-terminus, the 130-residue chain is Small ribosomal subunit protein uS9 (130 aa).

Belongs to the universal ribosomal protein uS9 family.

The polypeptide is Small ribosomal subunit protein uS9 (Idiomarina loihiensis (strain ATCC BAA-735 / DSM 15497 / L2-TR)).